We begin with the raw amino-acid sequence, 143 residues long: uncharacterized protein (143 aa).

The 133-residue stretch at 5–137 folds into the HTH marR-type domain; that stretch reads DARLASDLSL…LRNAADLILE (133 aa). A DNA-binding region (H-T-H motif) is located at residues 51–74; the sequence is PGALAIRERVRPPSMTRVIASLAD.

As to quaternary structure, homodimer.

This is an uncharacterized protein from Mycobacterium leprae (strain TN).